A 68-amino-acid chain; its full sequence is Putative membrane protein insertion efficiency factor (68 aa).

Belongs to the UPF0161 family.

The protein localises to the cell membrane. In terms of biological role, could be involved in insertion of integral membrane proteins into the membrane. The polypeptide is Putative membrane protein insertion efficiency factor (Herpetosiphon aurantiacus (strain ATCC 23779 / DSM 785 / 114-95)).